We begin with the raw amino-acid sequence, 156 residues long: Probable succinate transporter subunit YjjB (156 aa).

The next 4 membrane-spanning stretches (helical) occupy residues 7–27 (WALL…AMVF), 54–74 (FGMN…VIGI), 86–106 (VFTV…TAMI), and 128–148 (FLKA…PGLW).

It belongs to the ThrE exporter (TC 2.A.79) family. The transporter is composed of YjjB and YjjP.

Its subcellular location is the cell inner membrane. Its function is as follows. Involved in succinate export with YjjP. Both proteins are required for export. The polypeptide is Probable succinate transporter subunit YjjB (Yersinia pseudotuberculosis serotype I (strain IP32953)).